The following is a 314-amino-acid chain: Flotillin-like protein FloA (314 aa).

A helical membrane pass occupies residues 4–24 (IGPIIIAVLIIIFLIVFFTLV).

The protein belongs to the flotillin-like FloA family. Homooligomerizes.

The protein localises to the cell membrane. Its subcellular location is the membrane raft. Found in functional membrane microdomains (FMM) that may be equivalent to eukaryotic membrane rafts. FMMs are highly dynamic and increase in number as cells age. Flotillins are thought to be important factors in membrane fluidity. This is Flotillin-like protein FloA from Listeria innocua serovar 6a (strain ATCC BAA-680 / CLIP 11262).